Reading from the N-terminus, the 267-residue chain is MVTMRDLLECGVHFGHQTRRWNPKMKKFIFGERKGIYIIDLQKTIRYFRYTYNIVRDAAAEGKTILFVGTKKQAGAAIKEFAEKCEMPYVNHRWLGGMLTNFDTIKQSIRKLEVIEQMETDGSMDLLTKKEAGMLKSKKAKLELYLGGIRNMKNLPDMVFVIDCVKEKIAVKEANRLGMPVIAPLDTNCDPDVVDFPIPGNDDAIRSIQLFCQEMSEAINEGKALRDQDSEEEIQNKEQDEVSQEEKDDILDEAMNEEDFEIPEDKE.

Positions 222–267 (GKALRDQDSEEEIQNKEQDEVSQEEKDDILDEAMNEEDFEIPEDKE) are disordered. A compositionally biased stretch (basic and acidic residues) spans 223 to 240 (KALRDQDSEEEIQNKEQD). Positions 241–267 (EVSQEEKDDILDEAMNEEDFEIPEDKE) are enriched in acidic residues.

This sequence belongs to the universal ribosomal protein uS2 family.

The sequence is that of Small ribosomal subunit protein uS2 from Campylobacter hominis (strain ATCC BAA-381 / DSM 21671 / CCUG 45161 / LMG 19568 / NCTC 13146 / CH001A).